A 503-amino-acid polypeptide reads, in one-letter code: ATP synthase subunit alpha (503 aa).

170–177 (GDKQTGKT) contributes to the ATP binding site.

Belongs to the ATPase alpha/beta chains family. As to quaternary structure, F-type ATPases have 2 components, CF(1) - the catalytic core - and CF(0) - the membrane proton channel. CF(1) has five subunits: alpha(3), beta(3), gamma(1), delta(1), epsilon(1). CF(0) has three main subunits: a(1), b(2) and c(9-12). The alpha and beta chains form an alternating ring which encloses part of the gamma chain. CF(1) is attached to CF(0) by a central stalk formed by the gamma and epsilon chains, while a peripheral stalk is formed by the delta and b chains.

The protein resides in the cell inner membrane. The enzyme catalyses ATP + H2O + 4 H(+)(in) = ADP + phosphate + 5 H(+)(out). In terms of biological role, produces ATP from ADP in the presence of a proton gradient across the membrane. The alpha chain is a regulatory subunit. The sequence is that of ATP synthase subunit alpha from Helicobacter pylori (strain Shi470).